The primary structure comprises 441 residues: ATP-dependent RNA helicase SUB2-1 (441 aa).

The span at 1-19 (MSHEGEEDLLEYSDNEQDI) shows a compositional bias: acidic residues. The disordered stretch occupies residues 1–46 (MSHEGEEDLLEYSDNEQDIQVDASKAAEPSELDATTAEDASNGDAE). The Q motif motif lies at 57-85 (TGFKDFLLKPELARAIIDCGFEHPSEVQQ). Residues 88-263 (IPQSIHGTDV…RRFLQNPLEI (176 aa)) enclose the Helicase ATP-binding domain. 101-108 (AKSGLGKT) serves as a coordination point for ATP. The short motif at 210–213 (DECD) is the DECD box element. The 146-residue stretch at 291-436 (KLAQLLDDLE…EFPEEGIDPS (146 aa)) folds into the Helicase C-terminal domain.

It belongs to the DEAD box helicase family. DECD subfamily.

The protein resides in the nucleus. The catalysed reaction is ATP + H2O = ADP + phosphate + H(+). ATP-binding RNA helicase involved in transcription elongation and required for the export of mRNA out of the nucleus. SUB2 also plays a role in pre-mRNA splicing and spliceosome assembly. May be involved in rDNA and telomeric silencing, and maintenance of genome integrity. The chain is ATP-dependent RNA helicase SUB2-1 (SUB2-1) from Vanderwaltozyma polyspora (strain ATCC 22028 / DSM 70294 / BCRC 21397 / CBS 2163 / NBRC 10782 / NRRL Y-8283 / UCD 57-17) (Kluyveromyces polysporus).